Here is a 143-residue protein sequence, read N- to C-terminus: uncharacterized protein (143 aa).

2 consecutive transmembrane segments (helical) span residues 16-36 (LIFA…IFVW) and 48-68 (ICYI…FIYV). Asn71 carries an N-linked (GlcNAc...) asparagine; by host glycan.

It is found in the membrane. This is an uncharacterized protein from Acanthamoeba polyphaga (Amoeba).